The sequence spans 480 residues: Glycogen synthase (480 aa).

Residue Lys-15 participates in ADP-alpha-D-glucose binding.

This sequence belongs to the glycosyltransferase 1 family. Bacterial/plant glycogen synthase subfamily.

It catalyses the reaction [(1-&gt;4)-alpha-D-glucosyl](n) + ADP-alpha-D-glucose = [(1-&gt;4)-alpha-D-glucosyl](n+1) + ADP + H(+). It functions in the pathway glycan biosynthesis; glycogen biosynthesis. Synthesizes alpha-1,4-glucan chains using ADP-glucose. This is Glycogen synthase from Rhizobium rhizogenes (strain K84 / ATCC BAA-868) (Agrobacterium radiobacter).